The sequence spans 284 residues: Protein Ku (284 aa).

The 180-residue stretch at 10–189 folds into the Ku domain; sequence TIGLVTVPVK…ELRSTEGIVP (180 aa).

As to quaternary structure, homodimer. Interacts with host LigD.

Required for replication of viruses with short cos ends (4 bases). Stimulates dsDNA end-joining by host LigD. Binds dsDNA with either blunt, 5'- or 3-overhangs, protecting it from host exonuclease degradation. The polypeptide is Protein Ku (87) (Mycobacterium phage Corndog (Mycobacteriophage Corndog)).